The following is a 274-amino-acid chain: RsbT co-antagonist protein RsbRA (274 aa).

An STAS domain is found at 150-265 (SAPLIPVFEN…KGIQTALEMT (116 aa)). Phosphothreonine is present on residues T171 and T205.

In terms of assembly, interacts with RsbRB and RsbS in the stressosome. The stressosome probably also contains RsbRC and RsbRD. Post-translationally, phosphorylated by RsbT. This threonine phosphorylation abrogates the ability of RsbRA to stimulate RsbT in vitro.

In terms of biological role, acts as a positive regulator of sigma-B activity in response to salt and heat stress by stimulating the activity of the RsbT kinase toward RsbS in vitro. Its function is as follows. One of 4 functionally non-identical RsbR paralogs, it functions in the environmental signaling branch of the general stress response. Negative regulator of sigma-B activity. Non-phosphorylated RsbS binds to RsbT, preventing its association with RsbU. Requires any one of RsbRA, RsbRB, RsbRC or RsbRD to sequester RsbT. When RsbS and the RsbR paralog(s) are phosphorylated, they release RsbT, which can then bind and activate RsbU. The sequence is that of RsbT co-antagonist protein RsbRA (rsbRA) from Bacillus subtilis (strain 168).